Here is a 391-residue protein sequence, read N- to C-terminus: Phosphatidate cytidylyltransferase 4, chloroplastic (391 aa).

Residues 1 to 61 constitute a chloroplast transit peptide; it reads MATFAELVLS…SVSRRFLTAV (61 aa). Helical transmembrane passes span 102 to 122, 175 to 195, 202 to 222, 254 to 274, 298 to 318, and 321 to 341; these read IFGI…GWVF, FGNI…ALLV, FAQL…PSFW, VGLV…TFAF, IVGL…LSWP, and LFSS…GDLT.

This sequence belongs to the CDS family. Mg(2+) is required as a cofactor.

It is found in the plastid. It localises to the chloroplast membrane. It catalyses the reaction a 1,2-diacyl-sn-glycero-3-phosphate + CTP + H(+) = a CDP-1,2-diacyl-sn-glycerol + diphosphate. Its pathway is phospholipid metabolism; CDP-diacylglycerol biosynthesis; CDP-diacylglycerol from sn-glycerol 3-phosphate: step 3/3. With respect to regulation, highest activities is obtained at about 30 mM CTP and 2 mM phosphatidic acid (PA). In terms of biological role, may be involved in the synthesis of minor phospholipids and in modulation of IP3-mediated signal transduction. Promotes the biosynthesis of plastidial phosphatidylglycerol (PG) which is required for structure and function of thylakoid membranes and, hence, for photoautotrophic growth. The protein is Phosphatidate cytidylyltransferase 4, chloroplastic of Arabidopsis thaliana (Mouse-ear cress).